A 2414-amino-acid chain; its full sequence is Centrosome-associated protein CEP250 (2414 aa).

2 coiled-coil regions span residues glutamate 91–arginine 153 and leucine 248–glutamate 357. Disordered regions lie at residues glutamate 356–aspartate 384, alanine 672–alanine 707, serine 1191–glutamine 1212, glutamate 1269–leucine 1303, alanine 2050–glutamine 2071, alanine 2194–leucine 2238, and arginine 2275–aspartate 2317. Residues glutamine 371–aspartate 381 show a composition bias toward polar residues. A coiled-coil region spans residues glutamine 400–glutamine 1165. The segment covering arginine 684–glutamine 704 has biased composition (basic and acidic residues). Coiled coils occupy residues leucine 1237–serine 2200 and glycine 2231–alanine 2290. A compositionally biased stretch (low complexity) spans glutamine 1280–serine 1289. The segment covering glutamate 2196 to alanine 2209 has biased composition (polar residues). The segment covering arginine 2275–arginine 2286 has biased composition (basic and acidic residues). Serine 2292 carries the post-translational modification Phosphoserine. The segment covering glutamine 2305–aspartate 2317 has biased composition (low complexity). The stretch at leucine 2320–tyrosine 2345 forms a coiled coil. Serine 2389 and serine 2393 each carry phosphoserine; by NEK2. The interval leucine 2390–arginine 2414 is disordered.

Monomer and homodimer. Forms a complex in vitro with both NEK2 kinase and the PPP1CC catalytic subunit of protein phosphatase 1 (PP1). Interacts with CEP135. Interacts with CROCC/rootletin. Interacts with CNTLN. Interacts with NIN (via C-terminus). Differentially phosphorylated during cell cycle. Phosphorylation may regulate association/dissociation from centrosome. During M phase of mitosis, C-terminal part is phosphorylated by NEK2, suggesting that it may trigger the dissociation from the mitotic centrosome. Dephosphorylated in vitro by the PP1 phosphatase. Expressed in the retina.

It localises to the cytoplasm. The protein localises to the perinuclear region. The protein resides in the cytoskeleton. It is found in the microtubule organizing center. Its subcellular location is the centrosome. It localises to the centriole. The protein localises to the cilium basal body. The protein resides in the cell projection. It is found in the cilium. Its subcellular location is the photoreceptor outer segment. It localises to the photoreceptor inner segment. Its function is as follows. Plays an important role in centrosome cohesion during interphase. Recruits CCDC102B to the proximal ends of centrioles. Maintains centrosome cohesion by forming intercentriolar linkages. Accumulates at the proximal end of each centriole, forming supramolecular assemblies with viscous material properties that promote organelle cohesion. May be involved in ciliogenesis. This chain is Centrosome-associated protein CEP250 (Cep250), found in Mus musculus (Mouse).